The primary structure comprises 248 residues: Ras-like protein family member 11B (248 aa).

The tract at residues 30 to 248 is small GTPase-like; that stretch reads ASSRVIKIAV…SSKVRTATSV (219 aa). GTP is bound by residues 41 to 48, 88 to 99, and 153 to 156; these read GGSGVGKT, DTPGVQINEQNL, and NKAD. The tract at residues 206–228 is disordered; the sequence is QNTGTSERRKNSIIPRPKSPNMQ.

It belongs to the small GTPase superfamily. Ras family.

It carries out the reaction GTP + H2O = GDP + phosphate + H(+). This chain is Ras-like protein family member 11B, found in Xenopus laevis (African clawed frog).